The chain runs to 444 residues: Protein phosphatase 2C homolog C10F6.17c (444 aa).

In terms of domain architecture, PPM-type phosphatase spans 85 to 439 (RYDFNQVASN…DDITVTVIFF (355 aa)). The Mn(2+) site is built by aspartate 121, glycine 122, and aspartate 344.

It belongs to the PP2C family. Mg(2+) serves as cofactor. It depends on Mn(2+) as a cofactor.

It localises to the mitochondrion. The catalysed reaction is O-phospho-L-seryl-[protein] + H2O = L-seryl-[protein] + phosphate. It catalyses the reaction O-phospho-L-threonyl-[protein] + H2O = L-threonyl-[protein] + phosphate. Functionally, involved in regulation of pyruvate dehydrogenase activity. The sequence is that of Protein phosphatase 2C homolog C10F6.17c from Schizosaccharomyces pombe (strain 972 / ATCC 24843) (Fission yeast).